Reading from the N-terminus, the 276-residue chain is MPLMKTKPTSPGRRSMVKVVNPDLHKGKPFASLLEPQFQKAGRNNNGHITTRHKGGGHKHHYRVVDFKRNDKDGIPAKVERLEYDPNRSANIALILFADGECRYIPAAKGMTVGQAIMNGSEAPIKSGNNLPIRNIPVGSTIHCVEIMPGKGAQVARSAGGSAVLLAREGVYAQVRLRSGEVRRVLIDCRATIGEVGNEEHSLRQIGKAGANRWRGIRPTVRGVAMNPVDHPHGGGEGRTGEGRVPVSPWGTPTKGYRTRRNKRTTSMIVQRRQKR.

The segment at 224-258 is disordered; that stretch reads VAMNPVDHPHGGGEGRTGEGRVPVSPWGTPTKGYR. Positions 230-242 are enriched in basic and acidic residues; the sequence is DHPHGGGEGRTGE.

This sequence belongs to the universal ribosomal protein uL2 family. In terms of assembly, part of the 50S ribosomal subunit. Forms a bridge to the 30S subunit in the 70S ribosome.

Its function is as follows. One of the primary rRNA binding proteins. Required for association of the 30S and 50S subunits to form the 70S ribosome, for tRNA binding and peptide bond formation. It has been suggested to have peptidyltransferase activity; this is somewhat controversial. Makes several contacts with the 16S rRNA in the 70S ribosome. This is Large ribosomal subunit protein uL2 from Polynucleobacter necessarius subsp. necessarius (strain STIR1).